The chain runs to 256 residues: Zinc metalloprotease (256 aa).

The active-site Proton donor is the His74.

Belongs to the peptidase M4 family. The cofactor is Zn(2+).

The protein resides in the secreted. Functionally, may play a role in ulcer formation. Proteolytic digestion of gastric mucus has been suggested as an important mechanism by which its pathogenicity is at least partly exerted. The polypeptide is Zinc metalloprotease (hap) (Helicobacter pylori (Campylobacter pylori)).